We begin with the raw amino-acid sequence, 475 residues long: Sulfate adenylyltransferase subunit 1 (475 aa).

The tr-type G domain occupies 24–240 (KSLLRFLTCG…ESAEVERELE (217 aa)). Positions 33–40 (GSVDDGKS) are G1. Residue 33-40 (GSVDDGKS) participates in GTP binding. Residues 91–95 (GITID) are G2. Residues 112–115 (DTPG) are G3. GTP is bound by residues 112-116 (DTPGH) and 167-170 (NKMD). The tract at residues 167 to 170 (NKMD) is G4. The segment at 204-206 (SAL) is G5.

The protein belongs to the TRAFAC class translation factor GTPase superfamily. Classic translation factor GTPase family. CysN/NodQ subfamily. In terms of assembly, heterodimer composed of CysD, the smaller subunit, and CysN.

It carries out the reaction sulfate + ATP + H(+) = adenosine 5'-phosphosulfate + diphosphate. It participates in sulfur metabolism; hydrogen sulfide biosynthesis; sulfite from sulfate: step 1/3. Functionally, with CysD forms the ATP sulfurylase (ATPS) that catalyzes the adenylation of sulfate producing adenosine 5'-phosphosulfate (APS) and diphosphate, the first enzymatic step in sulfur assimilation pathway. APS synthesis involves the formation of a high-energy phosphoric-sulfuric acid anhydride bond driven by GTP hydrolysis by CysN coupled to ATP hydrolysis by CysD. The chain is Sulfate adenylyltransferase subunit 1 from Aeromonas hydrophila subsp. hydrophila (strain ATCC 7966 / DSM 30187 / BCRC 13018 / CCUG 14551 / JCM 1027 / KCTC 2358 / NCIMB 9240 / NCTC 8049).